The sequence spans 251 residues: Probable transcriptional regulatory protein SYNPCC7002_A0851 (251 aa).

The Response regulatory domain maps to 20–141 (RILVVEDEAV…ELVARCRALL (122 aa)). A 4-aspartylphosphate modification is found at aspartate 76. The segment at residues 153–251 (NSVRQFKDIS…TVRGFGYRFG (99 aa)) is a DNA-binding region (ompR/PhoB-type).

Phosphorylation.

The chain is Probable transcriptional regulatory protein SYNPCC7002_A0851 from Picosynechococcus sp. (strain ATCC 27264 / PCC 7002 / PR-6) (Agmenellum quadruplicatum).